The sequence spans 752 residues: Palmitoyltransferase AKR1 (752 aa).

Disordered regions lie at residues 1-21 (MTAEEVDKESDPAIEDVKSDY) and 49-68 (ASSELKHENDQGEERDLGSV). The Cytoplasmic portion of the chain corresponds to 1 to 318 (MTAEEVDKES…FPLPQYFSAS (318 aa)). Composition is skewed to basic and acidic residues over residues 9–21 (ESDPAIEDVKSDY) and 51–68 (SELKHENDQGEERDLGSV). ANK repeat units lie at residues 72 to 102 (PILERYHAACKQGDMKTLREMVESKVIDLSN), 108 to 137 (ERVSGLHWACINNRLSAVKYLAGAGAEVNF), 142 to 171 (LDATPLHWASKSGLVYIVDELLKAGADPNI), 175 to 208 (QGYNLLHTSVFSSNIMLVIYVLFFVVDGKEDVDQ), 212 to 241 (HQRTALQWATYQADALTVENLLKFNADVKN), and 245 to 274 (AGFTALHWGTVKGSIPVMDLLIKHGSDFFQ). The helical transmembrane segment at 319 to 339 (TGKMLTFFLPWVLIPLVFYIF) threads the bilayer. At 340–341 (SK) the chain is on the lumenal side. A helical transmembrane segment spans residues 342 to 362 (ITFFIALLINTIVLVISGLVL). Residues 363 to 380 (SRLVVPSYLLSKRHPILN) are Cytoplasmic-facing. Residues 381–401 (SPLLAGILSGTIAIAFFIWFT) form a helical membrane-spanning segment. At 402-412 (KISILTFTEKP) the chain is on the lumenal side. The helical transmembrane segment at 413 to 433 (VGNIIMLGFFIGLITLFIGLM) threads the bilayer. Residues 434-509 (KSDPGYIPGT…YNQIGLLNHK (76 aa)) lie on the Cytoplasmic side of the membrane. The region spanning 466–516 (HFCVHTWIRIPLRSKYDRDSACLISAFDHFCPWVYNQIGLLNHKLFYMFVV) is the DHHC domain. Catalysis depends on Cys-496, which acts as the S-palmitoyl cysteine intermediate. Residues 510–530 (LFYMFVVLLEISVWWFLPLMM) form a helical membrane-spanning segment. Residues 531-567 (EYFDELEDYLENRKGKHFGDCHFLGDEDLCFGLHHDT) lie on the Lumenal side of the membrane. A helical membrane pass occupies residues 568 to 588 (FNFLLLCWVIFQAFWVLCLIA). The Cytoplasmic segment spans residues 589–752 (VQTVQMLKGV…TLPNATEELV (164 aa)).

The protein belongs to the DHHC palmitoyltransferase family. AKR/ZDHHC17 subfamily.

It localises to the early endosome membrane. The protein localises to the golgi apparatus membrane. It carries out the reaction L-cysteinyl-[protein] + hexadecanoyl-CoA = S-hexadecanoyl-L-cysteinyl-[protein] + CoA. Functionally, palmitoyltransferase specific for casein kinase 1. This Kluyveromyces lactis (strain ATCC 8585 / CBS 2359 / DSM 70799 / NBRC 1267 / NRRL Y-1140 / WM37) (Yeast) protein is Palmitoyltransferase AKR1 (AKR1).